The sequence spans 65 residues: Small ribosomal subunit protein eS31 (65 aa).

Zn(2+)-binding residues include C36, C39, C55, and C58. The C4-type zinc finger occupies 36–58 (CPKCGSVMAFHKEPVPRWHCGKC).

Belongs to the eukaryotic ribosomal protein eS31 family. Part of the 30S ribosomal subunit. Zn(2+) is required as a cofactor.

The sequence is that of Small ribosomal subunit protein eS31 from Pyrobaculum aerophilum (strain ATCC 51768 / DSM 7523 / JCM 9630 / CIP 104966 / NBRC 100827 / IM2).